Consider the following 425-residue polypeptide: MLDLKRIRTDFDTVAAKLKNRGVSEDTLTHLKELDEKRRTLLVQSEELKAERNIASAAIAQAKRQKEDATQQIADMQKVSADIKTIDNQLVAIDQQVADIITVLPNTPHDSVPVGADEEDNVEIRRWGTPRDFDFEVKAHWDLGEDLDILDWERGAKVTGARFLFYKNLGARLERALYNFMLDEHIKEGYQEIITPYMVNHDSMFGTGQYPKFKEDTFELADTNFVLIPTAEVPLTNYYRGEILDGKELPIYFTAMSPSFRSEAGSAGRDTRGLIRLHQFHKVEMVKFAKSEESYQELEKMTANAENILQKLGLPYRVISLCTGDMGFSAAKTYDLEVWIPAQNTYREISSCSNTEDFQARRAQIRYRDEADGKVKLLHTLNGSGLAVGRTVAAILENYQNEDGSVTIPEVLRPYMGGETVISPK.

230 to 232 contributes to the L-serine binding site; the sequence is TAE. 261-263 lines the ATP pocket; the sequence is RSE. Glu284 contacts L-serine. 348–351 provides a ligand contact to ATP; sequence EISS. Position 384 (Ser384) interacts with L-serine.

This sequence belongs to the class-II aminoacyl-tRNA synthetase family. Type-1 seryl-tRNA synthetase subfamily. In terms of assembly, homodimer. The tRNA molecule binds across the dimer.

The protein localises to the cytoplasm. It carries out the reaction tRNA(Ser) + L-serine + ATP = L-seryl-tRNA(Ser) + AMP + diphosphate + H(+). The enzyme catalyses tRNA(Sec) + L-serine + ATP = L-seryl-tRNA(Sec) + AMP + diphosphate + H(+). The protein operates within aminoacyl-tRNA biosynthesis; selenocysteinyl-tRNA(Sec) biosynthesis; L-seryl-tRNA(Sec) from L-serine and tRNA(Sec): step 1/1. In terms of biological role, catalyzes the attachment of serine to tRNA(Ser). Is also able to aminoacylate tRNA(Sec) with serine, to form the misacylated tRNA L-seryl-tRNA(Sec), which will be further converted into selenocysteinyl-tRNA(Sec). This Streptococcus pyogenes serotype M5 (strain Manfredo) protein is Serine--tRNA ligase.